Reading from the N-terminus, the 132-residue chain is Gonadotropin subunit beta-1 (132 aa).

The N-terminal stretch at 1–17 (MMRGVTMVLLLPMLVWA) is a signal peptide. 5 cysteine pairs are disulfide-bonded: Cys25/Cys73, Cys39/Cys88, Cys50/Cys104, Cys54/Cys106, and Cys109/Cys116. Asn29 and Asn46 each carry an N-linked (GlcNAc...) asparagine glycan.

It belongs to the glycoprotein hormones subunit beta family. As to quaternary structure, heterodimer of an alpha and a beta chain.

The protein localises to the secreted. In terms of biological role, involved in gametogenesis and steroidogenesis. This chain is Gonadotropin subunit beta-1 (cgba), found in Ictalurus punctatus (Channel catfish).